Consider the following 85-residue polypeptide: Glutaredoxin 1 (85 aa).

One can recognise a Glutaredoxin domain in the interval 1-85 (MQTVIFGRSG…AAWVKENLDA (85 aa)). Residues Cys11 and Cys14 are joined by a disulfide bond.

The protein belongs to the glutaredoxin family. Monomer.

In terms of biological role, the disulfide bond functions as an electron carrier in the glutathione-dependent synthesis of deoxyribonucleotides by the enzyme ribonucleotide reductase. In addition, it is also involved in reducing some disulfides in a coupled system with glutathione reductase. This Shigella flexneri protein is Glutaredoxin 1 (grxA).